The following is a 435-amino-acid chain: Tol-Pal system protein TolB (435 aa).

An N-terminal signal peptide occupies residues 1–28 (MTKCSFFRAILVAVGLMTAAVFATPANA). A disordered region spans residues 288 to 310 (STAAIDTSPSYSPDGARVSFESD).

Belongs to the TolB family. The Tol-Pal system is composed of five core proteins: the inner membrane proteins TolA, TolQ and TolR, the periplasmic protein TolB and the outer membrane protein Pal. They form a network linking the inner and outer membranes and the peptidoglycan layer.

It localises to the periplasm. In terms of biological role, part of the Tol-Pal system, which plays a role in outer membrane invagination during cell division and is important for maintaining outer membrane integrity. This is Tol-Pal system protein TolB from Rhizobium johnstonii (strain DSM 114642 / LMG 32736 / 3841) (Rhizobium leguminosarum bv. viciae).